A 73-amino-acid polypeptide reads, in one-letter code: uncharacterized protein (73 aa).

The next 2 helical transmembrane spans lie at 10 to 30 (ILLAILFFALVVSLVGLYVSA) and 42 to 62 (YSTVYKVLMNAAMLLIVIYLI).

The protein localises to the cell membrane. This is an uncharacterized protein from Archaeoglobus fulgidus (strain ATCC 49558 / DSM 4304 / JCM 9628 / NBRC 100126 / VC-16).